The primary structure comprises 849 residues: MKNKILFSFSNPMNSNSSNNIENNNNSNNNNNNFKNNFKNFSRKRTNDIEIEDNITFSELLLQKEVLKGLEDGGYQRPSPIQLKAIPLGISGVDLIAQAKSGTGKTIVFGVIALECVLRESKLLRQKQELNKTQLTNQTNKQLLEMDDDTYVETMVGIIRKPLVLIIAPTREIAVQIKDVIKSISKYCKRIKCEVFIGGLNSNNNKDENNNNILNNEDVNRLNGTQIIVGTPGKIKSLIENLHLRTDTLKMVIMDEADKLLDASFSKTINWIYSAIGNGNSNKNNSSSGSGIQMLAFSATYPSYLINLLKLYMNNENLVEIRLCSDTPSLEGIKQYYQIFRNDFTENNYKTFQNKCKSLVLVLEQVSFYQAIIFCNHKIRGEELTRQLNREGWPTAFIAGGQNQKDRLSTMSALKSFNIRILVSTDLISRGIDVERVNLVINLDLPKDHETYFHRIGRTGRFGTYGVSITFINMKSIQQQQQQQQQQQQQIENENENENNNNNEGFQEIDFINQLIQEYSVDITERVDNDIIPEELYSYQLSNPNDQQSLANLKLKQQQTILLNKQLEELKINENENENQYQNEDEEEEQEEDDYHYENQHQNEDEEEEQEEDDYHYENQHQNEEEEQEQQEEDDDNYNYENDNDSEEYEFIDDSIIEQTEYYYLNSNNNNNNNKNKYGNTINNNHYRNSSFNGPKNSINNNKFKNKNINNNDQRNSQSNGIKKKVNTNNNNFYPHYYNNPYPQNYYYDYQYFSDNSYYNNNYNNNNNNNNNNNNNNNNNNNNNNNNNNNNNNNNNNNNNNNNNNNNYYQQHGNNPYGYNIPNSIQYSSNQFYYCTCPNCPTMNYHQYI.

The tract at residues phenylalanine 9–lysine 39 is disordered. The short motif at isoleucine 55–leucine 83 is the Q motif element. ATP is bound by residues arginine 77, glutamine 82, alanine 99–threonine 106, and glycine 102–isoleucine 107. Residues isoleucine 86–valine 319 form the Helicase ATP-binding domain. Residues aspartate 255–aspartate 258 carry the DEAD box motif. One can recognise a Helicase C-terminal domain in the interval lysine 355–asparagine 499. Disordered stretches follow at residues glutamine 480 to glutamate 504, isoleucine 572 to asparagine 644, serine 667 to tyrosine 737, and asparagine 761 to tyrosine 817. Acidic residues-rich tracts occupy residues asparagine 583–tyrosine 595, glutamate 604–tyrosine 615, and glutamate 624–asparagine 644. Low complexity-rich tracts occupy residues serine 667–tyrosine 687 and lysine 696–asparagine 720.

It belongs to the DEAD box helicase family. DDX20 subfamily. As to quaternary structure, part of the core SMN complex.

It is found in the cytoplasm. It localises to the nucleus. The enzyme catalyses ATP + H2O = ADP + phosphate + H(+). In terms of biological role, the SMN complex catalyzes the assembly of small nuclear ribonucleoproteins (snRNPs), the building blocks of the spliceosome, and thereby plays an important role in the splicing of cellular pre-mRNAs. Most spliceosomal snRNPs contain a common set of Sm proteins SNRPB, SNRPD1, SNRPD2, SNRPD3, SNRPE, SNRPF and SNRPG that assemble in a heptameric protein ring on the Sm site of the small nuclear RNA to form the core snRNP (Sm core). In the cytosol, the Sm proteins SNRPD1, SNRPD2, SNRPE, SNRPF and SNRPG are trapped in an inactive 6S pICln-Sm complex by the chaperone CLNS1A that controls the assembly of the core snRNP. To assemble core snRNPs, the SMN complex accepts the trapped 5Sm proteins from CLNS1A forming an intermediate. Binding of snRNA inside 5Sm triggers eviction of the SMN complex, thereby allowing binding of SNRPD3 and SNRPB to complete assembly of the core snRNP. May also play a role in the metabolism of small nucleolar ribonucleoprotein (snoRNPs). This Dictyostelium discoideum (Social amoeba) protein is Probable ATP-dependent RNA helicase ddx20 (ddx20).